Consider the following 405-residue polypeptide: MQEKDVSSHGFLPRFQHFATQAIHAGQEPEQWASKAVVPPISLSTTFKQEAPGQHSGFEYSRSGNPTXNCLEKAVAVLDGAKYSLAFASGLAATVTITHLLKAGXQIISMDDVYGGTNRYFRQVAAEFGLKISFVDCSKSKLLEAAITPETKLVWIETPTNPILKMIDIEACAQIVHKHGDIILVVDNTFMSAYFQRPLALGADICMYSATKYMNGHSDVVMGLVSLNSETLHSRLRFLQNSLGAVPSPIDCYLCNRGLKTLQVRMEKHFENGMAVAQFLESHPLVEKVIYPGLPSHPQHELAKRQCTGCPGMISFYIKGSLHHAETFLKSLKLFTLAESLGGYESLAELPAIMTHSSVPKSDREVLGIRDTLIRLSVGLEDKQDLMDDLDQALKAAHPTNASHN.

3 residues coordinate substrate: Arg62, Tyr114, and Arg119. An N6-(pyridoxal phosphate)lysine modification is found at Lys212. Residue Glu339 coordinates substrate.

Belongs to the trans-sulfuration enzymes family. In terms of assembly, homotetramer. Interacts with CALM in a calcium-dependent manner. Requires pyridoxal 5'-phosphate as cofactor.

The protein localises to the cytoplasm. The enzyme catalyses L,L-cystathionine + H2O = 2-oxobutanoate + L-cysteine + NH4(+). It catalyses the reaction L-cysteine + H2O = hydrogen sulfide + pyruvate + NH4(+) + H(+). The catalysed reaction is L-homocysteine + H2O = 2-oxobutanoate + hydrogen sulfide + NH4(+) + H(+). It carries out the reaction L-homoserine = 2-oxobutanoate + NH4(+). The enzyme catalyses L-selenocystathionine + H2O = L-selenocysteine + 2-oxobutanoate + NH4(+). The protein operates within amino-acid biosynthesis; L-cysteine biosynthesis; L-cysteine from L-homocysteine and L-serine: step 2/2. Functionally, catalyzes the last step in the trans-sulfuration pathway from L-methionine to L-cysteine in a pyridoxal-5'-phosphate (PLP)-dependent manner, which consists on cleaving the L,L-cystathionine molecule into L-cysteine, ammonia and 2-oxobutanoate. Part of the L-cysteine derived from the trans-sulfuration pathway is utilized for biosynthesis of the ubiquitous antioxidant glutathione. Besides its role in the conversion of L-cystathionine into L-cysteine, it utilizes L-cysteine and L-homocysteine as substrates (at much lower rates than L,L-cystathionine) to produce hydrogen sulfide (H2S). In vitro, it converts two L-cysteine molecules into lanthionine and H2S, and two L-homocysteine molecules to homolanthionine and H2S, which can be particularly relevant under conditions of severe hyperhomocysteinemia. Lanthionine and homolanthionine are structural homologs of L,L-cystathionine that differ by the absence or presence of an extra methylene group, respectively. Acts as a cysteine-protein sulfhydrase by mediating sulfhydration of target proteins: sulfhydration consists of converting -SH groups into -SSH on specific cysteine residues of target proteins such as GAPDH, PTPN1 and NF-kappa-B subunit RELA, thereby regulating their function. By generating the gasotransmitter H2S, it participates in a number of physiological processes such as vasodilation, bone protection, and inflammation. Plays an essential role in myogenesis by contributing to the biogenesis of H2S in skeletal muscle tissue. Can also accept homoserine as substrate. Catalyzes the elimination of selenocystathionine (which can be derived from the diet) to yield selenocysteine, ammonia and 2-oxobutanoate. This is Cystathionine gamma-lyase (CTH) from Sus scrofa (Pig).